A 589-amino-acid polypeptide reads, in one-letter code: WD repeat-containing protein 26 homolog (589 aa).

The interval 1–57 (MGVVEDTEPPLKRAKRLADEPNGFSANSSVRGSSVNSNSLGDLMARPLPSQGDDETI) is disordered. Low complexity predominate over residues 25-39 (SANSSVRGSSVNSNS). The 33-residue stretch at 64–96 (RKSEFVRIITRALYSLGYDKTGAMLEEESGISL) folds into the LisH domain. In terms of domain architecture, CTLH spans 97-154 (HNSTIKLFLQQVKDGKWDQSVKTLHRIGFPDEKAVKAASFLLLEQKFLEFLKVEKIAD). WD repeat units follow at residues 272–311 (SHTD…HISL), 317–358 (GHHK…HMYE), 360–398 (GGIS…KECW), 401–440 (QRTQ…ERLI), 442–480 (EEDM…KIVS), 484–526 (GHKR…LIVE), and 529–569 (GHAG…QQNQ).

Interacts with RANBPM. In terms of tissue distribution, expressed in roots, leaves and flowers.

It localises to the cytoplasm. Acts as a component involved in the crosstalk regulation between light, hormone and abiotic stress response. The chain is WD repeat-containing protein 26 homolog from Arabidopsis thaliana (Mouse-ear cress).